We begin with the raw amino-acid sequence, 272 residues long: Methylesterase 8 (272 aa).

The Acyl-ester intermediate role is filled by S102. Catalysis depends on charge relay system residues D222 and H250.

This sequence belongs to the AB hydrolase superfamily. Methylesterase family.

Its function is as follows. Methylesterase shown to have carboxylesterase activity in vitro. This Arabidopsis thaliana (Mouse-ear cress) protein is Methylesterase 8.